Consider the following 257-residue polypeptide: Phosphate import ATP-binding protein PstB (257 aa).

The ABC transporter domain maps to 11–252 (LEVRDLNFFY…PQKKATEDYI (242 aa)). 43–50 (GPSGCGKS) serves as a coordination point for ATP.

The protein belongs to the ABC transporter superfamily. Phosphate importer (TC 3.A.1.7) family. In terms of assembly, the complex is composed of two ATP-binding proteins (PstB), two transmembrane proteins (PstC and PstA) and a solute-binding protein (PstS).

It is found in the cell inner membrane. The enzyme catalyses phosphate(out) + ATP + H2O = ADP + 2 phosphate(in) + H(+). In terms of biological role, part of the ABC transporter complex PstSACB involved in phosphate import. Responsible for energy coupling to the transport system. The sequence is that of Phosphate import ATP-binding protein PstB from Chromobacterium violaceum (strain ATCC 12472 / DSM 30191 / JCM 1249 / CCUG 213 / NBRC 12614 / NCIMB 9131 / NCTC 9757 / MK).